The following is a 110-amino-acid chain: MKMYRIRKDDKVMVIAGKDAGKIGKVLKILRKKDRVLVEKTNMVKRHMRPNPYAQQPGGIVEKEMPIHVSNVMVVCSACGKATRVGYKTIESEGKEKKVRFCKKCNEVME.

This sequence belongs to the universal ribosomal protein uL24 family. As to quaternary structure, part of the 50S ribosomal subunit.

Its function is as follows. One of two assembly initiator proteins, it binds directly to the 5'-end of the 23S rRNA, where it nucleates assembly of the 50S subunit. Functionally, one of the proteins that surrounds the polypeptide exit tunnel on the outside of the subunit. In Desulfovibrio desulfuricans (strain ATCC 27774 / DSM 6949 / MB), this protein is Large ribosomal subunit protein uL24.